Consider the following 588-residue polypeptide: DNA ligase (588 aa).

E250 is a binding site for ATP. K252 acts as the N6-AMP-lysine intermediate in catalysis. 6 residues coordinate ATP: R257, R272, E302, F342, R417, and K423.

The protein belongs to the ATP-dependent DNA ligase family. The cofactor is Mg(2+).

It catalyses the reaction ATP + (deoxyribonucleotide)n-3'-hydroxyl + 5'-phospho-(deoxyribonucleotide)m = (deoxyribonucleotide)n+m + AMP + diphosphate.. In terms of biological role, DNA ligase that seals nicks in double-stranded DNA during DNA replication, DNA recombination and DNA repair. The polypeptide is DNA ligase (Nitrosopumilus maritimus (strain SCM1)).